The following is a 338-amino-acid chain: Lipoate-protein ligase A (338 aa).

The BPL/LPL catalytic domain occupies 29–216 (PATQRVLFLW…AFFAHYGERV (188 aa)). Residues arginine 71, 76–79 (GAVF), and lysine 134 each bind ATP. Lysine 134 provides a ligand contact to (R)-lipoate.

It belongs to the LplA family. In terms of assembly, monomer.

Its subcellular location is the cytoplasm. The enzyme catalyses L-lysyl-[lipoyl-carrier protein] + (R)-lipoate + ATP = N(6)-[(R)-lipoyl]-L-lysyl-[lipoyl-carrier protein] + AMP + diphosphate + H(+). The protein operates within protein modification; protein lipoylation via exogenous pathway; protein N(6)-(lipoyl)lysine from lipoate: step 1/2. It functions in the pathway protein modification; protein lipoylation via exogenous pathway; protein N(6)-(lipoyl)lysine from lipoate: step 2/2. Catalyzes both the ATP-dependent activation of exogenously supplied lipoate to lipoyl-AMP and the transfer of the activated lipoyl onto the lipoyl domains of lipoate-dependent enzymes. The polypeptide is Lipoate-protein ligase A (Escherichia coli (strain SMS-3-5 / SECEC)).